The following is a 78-amino-acid chain: Large ribosomal subunit protein bL28 (78 aa).

It belongs to the bacterial ribosomal protein bL28 family.

This chain is Large ribosomal subunit protein bL28, found in Colwellia psychrerythraea (strain 34H / ATCC BAA-681) (Vibrio psychroerythus).